We begin with the raw amino-acid sequence, 498 residues long: Glycerol kinase (498 aa).

Threonine 12 lines the ADP pocket. Residues threonine 12, threonine 13, and serine 14 each contribute to the ATP site. Threonine 12 is a sn-glycerol 3-phosphate binding site. Residue arginine 16 participates in ADP binding. Sn-glycerol 3-phosphate contacts are provided by arginine 82, glutamate 83, tyrosine 134, and aspartate 241. Positions 82, 83, 134, 241, and 242 each coordinate glycerol. Residues threonine 263 and glycine 310 each contribute to the ADP site. Threonine 263, glycine 310, glutamine 314, and glycine 411 together coordinate ATP. ADP is bound by residues glycine 411 and asparagine 415.

The protein belongs to the FGGY kinase family.

The catalysed reaction is glycerol + ATP = sn-glycerol 3-phosphate + ADP + H(+). It functions in the pathway polyol metabolism; glycerol degradation via glycerol kinase pathway; sn-glycerol 3-phosphate from glycerol: step 1/1. Its activity is regulated as follows. Inhibited by fructose 1,6-bisphosphate (FBP). In terms of biological role, key enzyme in the regulation of glycerol uptake and metabolism. Catalyzes the phosphorylation of glycerol to yield sn-glycerol 3-phosphate. In Herminiimonas arsenicoxydans, this protein is Glycerol kinase.